We begin with the raw amino-acid sequence, 255 residues long: Folate receptor alpha (255 aa).

An N-terminal signal peptide occupies residues 1–24; the sequence is MAHLMTVQLLLLVMWMAECAQSRA. Disulfide bonds link Cys35–Cys63, Cys55–Cys103, Cys64–Cys107, Cys87–Cys173, Cys94–Cys144, Cys133–Cys207, Cys137–Cys187, and Cys150–Cys167. N-linked (GlcNAc...) asparagine glycosylation occurs at Asn67. Folate contacts are provided by residues Asp101, Tyr105, 122 to 126, 155 to 160, and Ser194; these read WRKER and HKGWNW. Residue Asn159 is glycosylated (N-linked (GlcNAc...) asparagine). Asn199 carries N-linked (GlcNAc...) asparagine glycosylation. A lipid anchor (GPI-anchor amidated serine) is attached at Ser232. The propeptide at 233–255 is removed in mature form; that stretch reads GAGFHGTWPLLCSLSLVLLWVIS.

The protein belongs to the folate receptor family. Post-translationally, the secreted form is derived from the membrane-bound form either by cleavage of the GPI anchor, or/and by proteolysis catalyzed by a metalloprotease. As to expression, detected in kidney proximal tubules (at protein level).

The protein localises to the cell membrane. It is found in the apical cell membrane. Its subcellular location is the basolateral cell membrane. The protein resides in the secreted. It localises to the cytoplasmic vesicle. The protein localises to the clathrin-coated vesicle. It is found in the endosome. Binds to folate and reduced folic acid derivatives and mediates delivery of 5-methyltetrahydrofolate and folate analogs into the interior of cells. Has high affinity for folate and folic acid analogs at neutral pH. Exposure to slightly acidic pH after receptor endocytosis triggers a conformation change that strongly reduces its affinity for folates and mediates their release. Required for normal embryonic development and normal cell proliferation. Required for renal folate reabsorption. The polypeptide is Folate receptor alpha (Folr1) (Mus musculus (Mouse)).